The sequence spans 551 residues: ETS domain-containing transcription factor ERF (551 aa).

Phosphothreonine is present on residues T3 and T7. Residues S20 and S24 each carry the phosphoserine modification. Positions 27-107 (IQLWHFILEL…KGKRFTYKFN (81 aa)) form a DNA-binding region, ETS. Disordered stretches follow at residues 130 to 169 (QSAPPVPSGGSHFRFPPSTPSEVLSPTEDPRSPPACSSSS) and 184 to 304 (GSVS…SHFS). A phosphoserine mark is found at S185 and S190. Over residues 239–250 (RGGPEPLSPFPV) the composition is skewed to pro residues. Over residues 251–268 (SPLAGPGSLLPPQLSPAL) the composition is skewed to low complexity. Residues 289–301 (SGGGGPSGSGGGS) show a composition bias toward gly residues. At S327 the chain carries Phosphoserine. The disordered stretch occupies residues 342 to 476 (PQRPDKCPLP…KPEPGEAPGV (135 aa)). The span at 348–361 (CPLPPMAPETPPVP) shows a compositional bias: pro residues. The span at 362-373 (SSASSSSSSSSS) shows a compositional bias: low complexity. Positions 404–413 (GGSGSGGLAE) are enriched in gly residues. Phosphoserine is present on residues S433 and S437. Residues 433–453 (SEGESEEVEVTDISDEDEEDG) show a composition bias toward acidic residues. T443 is subject to Phosphothreonine. S446 carries the post-translational modification Phosphoserine. Residues K467, K483, and K514 each participate in a glycyl lysine isopeptide (Lys-Gly) (interchain with G-Cter in SUMO2) cross-link. Residues 495 to 551 (RLEGGGCLSGGPEDEGEDKKVRGDVGPGESGGPLTPRRVSSDLQHATAQLSLEHRDS) are disordered. T529 carries the post-translational modification Phosphothreonine; by MAPK1. S534, S535, and S551 each carry phosphoserine. A compositionally biased stretch (polar residues) spans 535–544 (SDLQHATAQL).

It belongs to the ETS family. Post-translationally, phosphorylated by multiple kinases including MAPK1/ERK2 at THR-529. Phosphorylation regulates the activity of ERF. As to expression, expressed along the osteogenic margins of the developing calvarial bones, in a similar distribution to that observed for the master osteogenic regulator RUNX2.

It localises to the nucleus. Potent transcriptional repressor that binds to the H1 element of the Ets2 promoter. May regulate other genes involved in cellular proliferation. Required for extraembryonic ectoderm differentiation, ectoplacental cone cavity closure, and chorioallantoic attachment. May be important for regulating trophoblast stem cell differentiation. The sequence is that of ETS domain-containing transcription factor ERF (Erf) from Mus musculus (Mouse).